A 173-amino-acid polypeptide reads, in one-letter code: Large ribosomal subunit protein uL16 (173 aa).

Belongs to the universal ribosomal protein uL16 family.

This is Large ribosomal subunit protein uL16 from Methanococcus maripaludis (strain C6 / ATCC BAA-1332).